Here is a 1051-residue protein sequence, read N- to C-terminus: Putative helicase/primase complex protein (1051 aa).

Belongs to the asfivirus F1055L family.

Functionally, may be involved in DNA replication. The polypeptide is Putative helicase/primase complex protein (Ornithodoros (relapsing fever ticks)).